The following is a 192-amino-acid chain: Transmembrane protein 276 (192 aa).

Positions 1–32 (MVSKPRTEWSTVLSHLVLAGVSLHAAVSSVQS) are cleaved as a signal peptide. The next 4 membrane-spanning stretches (helical) occupy residues 35–55 (GAAAGFLLQTFAAIIMLAPGP), 63–83 (AGAWVATVIGLPLLAFDFHWV), 92–112 (LLLGGGMVLAVAGDHLGPEGC), and 114–134 (VAGQAVLLVVAVTILIVAVFT).

It is found in the membrane. This Mus musculus (Mouse) protein is Transmembrane protein 276.